A 276-amino-acid chain; its full sequence is Ribonuclease 3 (276 aa).

An RNase III domain is found at Leu-30 to Gly-161. Mg(2+) is bound at residue Glu-74. Asp-78 is a catalytic residue. Mg(2+) contacts are provided by Asp-147 and Glu-150. Glu-150 is an active-site residue. In terms of domain architecture, DRBM spans Asn-188 to Arg-257.

The protein belongs to the ribonuclease III family. In terms of assembly, homodimer. The cofactor is Mg(2+).

It localises to the cytoplasm. It carries out the reaction Endonucleolytic cleavage to 5'-phosphomonoester.. In terms of biological role, digests double-stranded RNA. Involved in the processing of primary rRNA transcript to yield the immediate precursors to the large and small rRNAs (23S and 16S). Processes some mRNAs, and tRNAs when they are encoded in the rRNA operon. Processes pre-crRNA and tracrRNA of type II CRISPR loci if present in the organism. The polypeptide is Ribonuclease 3 (Chlorobium luteolum (strain DSM 273 / BCRC 81028 / 2530) (Pelodictyon luteolum)).